A 492-amino-acid polypeptide reads, in one-letter code: 6-phosphogluconate dehydrogenase, decarboxylating 2 (492 aa).

Residues 12 to 17, 35 to 37, 77 to 79, and asparagine 105 each bind NADP(+); these read GLAVMG, NRT, and IKA. Substrate-binding positions include asparagine 105 and 131–133; that span reads SGG. Lysine 185 serves as the catalytic Proton acceptor. A substrate-binding site is contributed by 188-189; it reads HN. Residue glutamate 192 is the Proton donor of the active site. Tyrosine 193, lysine 262, arginine 289, arginine 449, and histidine 455 together coordinate substrate.

It belongs to the 6-phosphogluconate dehydrogenase family. In terms of assembly, homodimer.

The enzyme catalyses 6-phospho-D-gluconate + NADP(+) = D-ribulose 5-phosphate + CO2 + NADPH. Its pathway is carbohydrate degradation; pentose phosphate pathway; D-ribulose 5-phosphate from D-glucose 6-phosphate (oxidative stage): step 3/3. Its function is as follows. Catalyzes the oxidative decarboxylation of 6-phosphogluconate to ribulose 5-phosphate and CO(2), with concomitant reduction of NADP to NADPH. The chain is 6-phosphogluconate dehydrogenase, decarboxylating 2 (GND2) from Saccharomyces cerevisiae (strain ATCC 204508 / S288c) (Baker's yeast).